The chain runs to 276 residues: 2-dehydro-3-deoxyphosphooctonate aldolase (276 aa).

It belongs to the KdsA family.

The protein resides in the cytoplasm. The enzyme catalyses D-arabinose 5-phosphate + phosphoenolpyruvate + H2O = 3-deoxy-alpha-D-manno-2-octulosonate-8-phosphate + phosphate. It participates in carbohydrate biosynthesis; 3-deoxy-D-manno-octulosonate biosynthesis; 3-deoxy-D-manno-octulosonate from D-ribulose 5-phosphate: step 2/3. The protein operates within bacterial outer membrane biogenesis; lipopolysaccharide biosynthesis. This is 2-dehydro-3-deoxyphosphooctonate aldolase from Chelativorans sp. (strain BNC1).